The sequence spans 478 residues: Quinoprotein glucose dehydrogenase B (478 aa).

A signal peptide spans 1 to 24 (MNKHLLAKIALLSAVQLVTLSAFA). D-glucose-binding residues include glutamine 100 and aspartate 167. Residue histidine 168 is the Proton acceptor of the active site. D-glucose-binding residues include glutamine 192 and arginine 252. The interval 252–253 (RN) is PQQ. 8 residues coordinate Ca(2+): glycine 271, proline 272, glutamate 277, tyrosine 287, alanine 293, tyrosine 295, aspartate 297, and glutamate 333. Residues tyrosine 367, threonine 372, and lysine 401 each coordinate pyrroloquinoline quinone. Positions 430-432 (RYR) are PQQ.

The protein belongs to the PQQ oxidoreductase GdhB family. In terms of assembly, homodimer. It depends on pyrroloquinoline quinone as a cofactor. Ca(2+) is required as a cofactor.

The enzyme catalyses a ubiquinone + D-glucose = D-glucono-1,5-lactone + a ubiquinol. Its function is as follows. Oxidizes glucose to gluconolactone. This Acinetobacter calcoaceticus protein is Quinoprotein glucose dehydrogenase B (gdhB).